The following is a 315-amino-acid chain: Calumenin-A (315 aa).

Residues methionine 1–serine 19 form the signal peptide. EF-hand domains follow at residues glutamate 68 to lysine 103, tyrosine 104 to aspartate 139, histidine 151 to aspartate 186, methionine 188 to glutamate 223, tryptophan 229 to aspartate 264, and histidine 265 to serine 300. Ca(2+)-binding residues include aspartate 81, aspartate 83, aspartate 85, glutamate 92, aspartate 117, asparagine 119, aspartate 121, methionine 123, and glutamate 128. The N-linked (GlcNAc...) asparagine glycan is linked to asparagine 131. Ca(2+)-binding residues include aspartate 164, asparagine 166, aspartate 168, glutamate 175, aspartate 201, asparagine 203, aspartate 205, glutamate 212, aspartate 242, asparagine 244, aspartate 246, lysine 248, glutamate 253, aspartate 278, asparagine 280, aspartate 282, lysine 284, and glutamate 289. A Prevents secretion from ER motif is present at residues histidine 312–phenylalanine 315.

Belongs to the CREC family. As to quaternary structure, interacts with ggcx.

Its subcellular location is the endoplasmic reticulum membrane. It localises to the golgi apparatus. It is found in the secreted. The protein localises to the melanosome. The protein resides in the sarcoplasmic reticulum lumen. Functionally, involved in regulation of vitamin K-dependent carboxylation of multiple N-terminal glutamate residues. Seems to inhibit gamma-carboxylase ggcx. Binds 7 calcium ions with a low affinity. The polypeptide is Calumenin-A (calua) (Salmo salar (Atlantic salmon)).